The following is a 168-amino-acid chain: G/U mismatch-specific DNA glycosylase (168 aa).

Belongs to the uracil-DNA glycosylase (UDG) superfamily. TDG/mug family. In terms of assembly, binds DNA as a monomer.

The protein resides in the cytoplasm. The enzyme catalyses Specifically hydrolyzes mismatched double-stranded DNA and polynucleotides, releasing free uracil.. In terms of biological role, excises ethenocytosine and uracil, which can arise by alkylation or deamination of cytosine, respectively, from the corresponding mispairs with guanine in ds-DNA. It is capable of hydrolyzing the carbon-nitrogen bond between the sugar-phosphate backbone of the DNA and the mispaired base. The complementary strand guanine functions in substrate recognition. Required for DNA damage lesion repair in stationary-phase cells. The protein is G/U mismatch-specific DNA glycosylase of Escherichia fergusonii (strain ATCC 35469 / DSM 13698 / CCUG 18766 / IAM 14443 / JCM 21226 / LMG 7866 / NBRC 102419 / NCTC 12128 / CDC 0568-73).